The chain runs to 581 residues: Adenine deaminase (581 aa).

Belongs to the metallo-dependent hydrolases superfamily. Adenine deaminase family. It depends on Mn(2+) as a cofactor.

The catalysed reaction is adenine + H2O + H(+) = hypoxanthine + NH4(+). This Clostridium botulinum (strain Eklund 17B / Type B) protein is Adenine deaminase.